A 495-amino-acid polypeptide reads, in one-letter code: AAA-ATPase At2g18193 (495 aa).

The helical transmembrane segment at Phe-7–Phe-28 threads the bilayer. Residue Gly-250–Ser-257 coordinates ATP. A disordered region spans residues Glu-451–Ile-495. Basic residues predominate over residues Val-471–Ile-495.

Belongs to the AAA ATPase family. BCS1 subfamily. The cofactor is Mg(2+).

It is found in the membrane. The enzyme catalyses ATP + H2O = ADP + phosphate + H(+). The polypeptide is AAA-ATPase At2g18193 (Arabidopsis thaliana (Mouse-ear cress)).